Consider the following 119-residue polypeptide: Holo-[acyl-carrier-protein] synthase (119 aa).

Residues D2 and E51 each contribute to the Mg(2+) site.

This sequence belongs to the P-Pant transferase superfamily. AcpS family. It depends on Mg(2+) as a cofactor.

The protein resides in the cytoplasm. It carries out the reaction apo-[ACP] + CoA = holo-[ACP] + adenosine 3',5'-bisphosphate + H(+). Functionally, transfers the 4'-phosphopantetheine moiety from coenzyme A to a Ser of acyl-carrier-protein. In Chlorobium luteolum (strain DSM 273 / BCRC 81028 / 2530) (Pelodictyon luteolum), this protein is Holo-[acyl-carrier-protein] synthase.